The primary structure comprises 136 residues: Sec-independent protein translocase protein TatB (136 aa).

Residues 1–21 (MFDIGFWELVLISVIGLVVLG) form a helical membrane-spanning segment. Residues 66–136 (ASKQGLSDLD…TTPPRQDKNE (71 aa)) are disordered. 2 stretches are compositionally biased toward basic and acidic residues: residues 77–89 (ELQK…KETA) and 96–107 (YKKDIDDIKTSL). Positions 108 to 130 (DKNPSGTTQQENSILDSSKTTPP) are enriched in polar residues.

Belongs to the TatB family. In terms of assembly, the Tat system comprises two distinct complexes: a TatABC complex, containing multiple copies of TatA, TatB and TatC subunits, and a separate TatA complex, containing only TatA subunits. Substrates initially bind to the TatABC complex, which probably triggers association of the separate TatA complex to form the active translocon.

The protein resides in the cell inner membrane. In terms of biological role, part of the twin-arginine translocation (Tat) system that transports large folded proteins containing a characteristic twin-arginine motif in their signal peptide across membranes. Together with TatC, TatB is part of a receptor directly interacting with Tat signal peptides. TatB may form an oligomeric binding site that transiently accommodates folded Tat precursor proteins before their translocation. The polypeptide is Sec-independent protein translocase protein TatB (Psychromonas ingrahamii (strain DSM 17664 / CCUG 51855 / 37)).